Reading from the N-terminus, the 346-residue chain is UPF0283 membrane protein VIBHAR_01918 (346 aa).

Residues 1–17 show a composition bias toward basic and acidic residues; it reads MSELKQKQVFKEKVMHS. Residues 1–28 form a disordered region; it reads MSELKQKQVFKEKVMHSEEEDVSPELNT. A run of 2 helical transmembrane segments spans residues 73–93 and 98–118; these read LFAT…ITAI and WLAL…LGAL.

This sequence belongs to the UPF0283 family.

The protein localises to the cell inner membrane. The sequence is that of UPF0283 membrane protein VIBHAR_01918 from Vibrio campbellii (strain ATCC BAA-1116).